The chain runs to 778 residues: METFFIETLASDVYGKALNVDLDRLSQAQIKYTLQELISYCSALTILHYDYSTLAARLSVYQLHQSTASSFSKAVRLQAAQSCSRLSPQFVDVVYKYKAIFDSYIDYSRDYKLSLLGIETMKNSYLLKNKDGVIMERPQDAYMRVAIMIYGMGKVVNIKMILLTYDLLSRHIITHASPTMFNAGTKKPQLSSCFLLNVNDNLENLYDMVKTAGIISGGGGGIGLCLSGIRAKNSFISGSGLRSNGIQNYIMLQNASQCYANQGGLRPGAYAVYLELWHQDIFTFLEMPRLKGQMAEQRLNAPNLKYGLWVPDLFMEILEDQIHNRGDGRWYLFSPDQAPNLHKVFDLERSQHENAHREFKKLYYQYVAEKRYTGVTTAKEIIKAWFKTVIQVGNPYIGFKDAINRKSNLSHVGTITNSNLCIEVTIPCWEGDKAEQGVCNLAAVNLAAFIRENGYDYRGLIEASGNVTENLDNIIDNGYYPTEATRRSNMRHRPIGIGVFGLADVFASLKIKFGSPEAIAMDEAIHAALYYGAMRRSIELAKEKGSHPSFPGSAASKGLLQPDLWVRCGDLIPSWEERVAQTTQGVLTRKSWRQLRLAAIQGVRNGYLTALMPTATSSNSTGKNECFEPFTSNLYTRRTLSGEFIVLNKYLIDDLKEINLWTEAIQLQLLNAGGSIQHILDIPAEIRDRYKTSREMNQKILTKHAAARNPFVSQSMSLNYYFYEPELSQVLTVLVLGWKKGLTTGSYYCHFSPGAGTQKKIIRNSEKACNADCEACLL.

Residues S177, 192–193 (SC), G221, 419–423 (NLCIE), and 613–617 (PTATS) each bind substrate. Cysteines 193 and 439 form a disulfide. The Proton acceptor role is filled by N419. The Cysteine radical intermediate role is filled by C421. Catalysis depends on E423, which acts as the Proton acceptor.

Belongs to the ribonucleoside diphosphate reductase large chain family. In terms of assembly, heterotetramer composed of a homodimer of the large subunit (R1) and a homodimer of the small subunit (R2). Larger multisubunit protein complex are also active, composed of (R1)n(R2)n.

The catalysed reaction is a 2'-deoxyribonucleoside 5'-diphosphate + [thioredoxin]-disulfide + H2O = a ribonucleoside 5'-diphosphate + [thioredoxin]-dithiol. With respect to regulation, under complex allosteric control mediated by deoxynucleoside triphosphates and ATP binding. The type of nucleotide bound at the specificity site determines substrate preference. It seems probable that ATP makes the enzyme reduce CDP and UDP, dGTP favors ADP reduction and dTTP favors GDP reduction. Its function is as follows. Ribonucleoside-diphosphate reductase holoenzyme provides the precursors necessary for viral DNA synthesis. Allows virus growth in non-dividing cells. Catalyzes the biosynthesis of deoxyribonucleotides from the corresponding ribonucleotides. This is Ribonucleoside-diphosphate reductase large subunit from African swine fever virus (isolate Tick/South Africa/Pretoriuskop Pr4/1996) (ASFV).